The following is a 335-amino-acid chain: GIPYWTYNNGDEPLVAISLLDTSNIANQLDSTPRVFYLGGNPEVEFPETQEEQQERHQQKHSLPVGRRGGQHQQEEESEEQKDGNSVLSGFSSEFLAQTFNTEEDTAKRLRSPRDKRNQIVRVEGGLRIINPEGQQEEEEQEEEEKQRSEQGRNGLEETICSLKIRENIAQPARADLYNPRAGSISTANSLTLPILRYLRLSAEYVRLYRNGIYAPHWNINANSLLYVIRGEGRVRIVNSQGNAVFDNKVRKGQLVVVPQNFVVAEQAGEEEGLEYLVFKTNDRAAVSHVQQVFRATPADVLANAFGLRQRQVTELKLSGNRGPLVHPHSQSQSN.

Disordered regions lie at residues 47–87 (PETQ…GNSV) and 102–155 (TEED…GRNG). The span at 105 to 118 (DTAKRLRSPRDKRN) shows a compositional bias: basic and acidic residues. Acidic residues predominate over residues 135–144 (QQEEEEQEEE). In terms of domain architecture, Cupin type-1 spans 167 to 314 (ENIAQPARAD…AFGLRQRQVT (148 aa)).

The protein belongs to the 11S seed storage protein (globulins) family. In terms of assembly, hexamer; each subunit is composed of an acidic and a basic chain derived from a single precursor and linked by a disulfide bond.

In terms of biological role, this protein found in the seeds of many leguminous and non-leguminous plants is the source of sulfur-containing amino acids in seed meals. This is Legumin type B (LEB7) from Vicia faba (Broad bean).